We begin with the raw amino-acid sequence, 203 residues long: VEL1-related protein SPBPB2B2.15 (203 aa).

An N-terminal signal peptide occupies residues 1–16 (MFKNLIFLFFIGLATA).

The protein belongs to the VEL1 family.

The protein resides in the cytoplasm. It is found in the cytosol. The protein is VEL1-related protein SPBPB2B2.15 of Schizosaccharomyces pombe (strain 972 / ATCC 24843) (Fission yeast).